We begin with the raw amino-acid sequence, 868 residues long: Pro-neuregulin-2, membrane-bound isoform (868 aa).

The interval 1–114 (MRQVCCSALP…AAGGMRRDPA (114 aa)) is disordered. Residues 1-127 (MRQVCCSALP…SMLLFGVSLA (127 aa)) constitute a propeptide that is removed on maturation. A compositionally biased stretch (low complexity) spans 19–75 (SSYSYSDSSSSSSSNNSSSSTSSRSSSRSSSRSSRGSTTTTSSSENSGSNSGSIFRP). N-linked (GlcNAc...) asparagine glycosylation is found at N33 and N34. Over residues 76–90 (AAPPEPRPQPQPQPR) the composition is skewed to pro residues. Low complexity predominate over residues 91 to 108 (SPAARRAAARSRAAAAGG). Topologically, residues 128-429 (CYSPSLKSVQ…KEAEELYQKR (302 aa)) are extracellular. N-linked (GlcNAc...) asparagine glycosylation is found at N163, N294, and N362. Residues 253–348 (PKLKKMKSQT…RGRLHVNSVS (96 aa)) form the Ig-like C2-type domain. 4 cysteine pairs are disulfide-bonded: C273-C327, C361-C375, C369-C386, and C388-C397. In terms of domain architecture, EGF-like spans 357–398 (HARKCNETAKSYCVNGGVCYYIEGINQLSCKCPNGFFGQRCL). The chain crosses the membrane as a helical span at residues 430 to 450 (VLTITGICVALLVVGIVCVVA). Residues 451-868 (YCKTKKQRRQ…TRAKQDSGPL (418 aa)) lie on the Cytoplasmic side of the membrane. Disordered regions lie at residues 469-488 (MCPA…PRLD), 516-553 (TFSG…SESL), 671-690 (LLRH…DMQR), 720-806 (ASPF…DGAL), and 823-868 (LRSD…SGPL). The segment covering 518 to 530 (SGSHSCSPSHHCS) has biased composition (low complexity). Residues 538–551 (HRHESHTWSLERSE) are compositionally biased toward basic and acidic residues. Over residues 766-794 (LNGLAAQRARAARDSLSLSSGSGCGSASA) the composition is skewed to low complexity.

It belongs to the neuregulin family. Interacts with ERBB3 and ERBB4. Post-translationally, proteolytic cleavage close to the plasma membrane on the external face leads to the release of the soluble growth factor form. Extensive glycosylation precedes the proteolytic cleavage. In terms of tissue distribution, expressed in most parts of the brain, especially the olfactory bulb and cerebellum where it localizes in granule and Purkinje cells. In the hippocampus, found in the granule cells of the dentate gyrus. In the basal forebrain, found in the cholinergic cells. In the hindbrain, weakly detectable in the motor trigeminal nucleus. Not detected in the hypothalamus. Also found in the liver and in the thymus. Not detected in heart, adrenal gland, or testis.

It localises to the cell membrane. The protein resides in the secreted. Functionally, direct ligand for ERBB3 and ERBB4 tyrosine kinase receptors. Concomitantly recruits ERBB1 and ERBB2 coreceptors, resulting in ligand-stimulated tyrosine phosphorylation and activation of the ERBB receptors. May also promote the heterodimerization with the EGF receptor. The protein is Pro-neuregulin-2, membrane-bound isoform (Nrg2) of Rattus norvegicus (Rat).